The chain runs to 110 residues: Eukaryotic translation initiation factor eIF1 (110 aa).

This sequence belongs to the SUI1 family.

Functionally, probably involved in translation. This is Eukaryotic translation initiation factor eIF1 from Anopheles gambiae (African malaria mosquito).